A 314-amino-acid polypeptide reads, in one-letter code: Mitochondrial 2-oxoglutarate/malate carrier protein (314 aa).

Position 2 is an N-acetylalanine (Ala-2). At Ser-6 the chain carries Phosphoserine. 3 Solcar repeats span residues 23–108 (VKFL…LFER), 117–208 (PGFL…SKQF), and 217–306 (DNIL…MNKA). The helical transmembrane segment at 24 to 42 (KFLFGGLAGMGATVFVQPL) threads the bilayer. Residue Lys-57 is modified to N6-succinyllysine. Residue Lys-73 is modified to N6-acetyllysine. A helical membrane pass occupies residues 83–101 (GLSAGLLRQATYTTTRLGI). Tyr-102 bears the Phosphotyrosine mark. 3 helical membrane passes run 119 to 140 (FLLK…GTPA), 183 to 202 (GCIP…LASY), and 222 to 240 (HFCA…SMPV). Lys-256 is modified (N6-acetyllysine). The helical transmembrane segment at 281–300 (GFTPYYARLGPHTVLTFIFL) threads the bilayer.

It belongs to the mitochondrial carrier (TC 2.A.29) family. Interacts with SMIM26. As to expression, most highly expressed in the heart.

It is found in the mitochondrion inner membrane. The catalysed reaction is (S)-malate(in) + 2-oxoglutarate(out) = (S)-malate(out) + 2-oxoglutarate(in). The enzyme catalyses malonate(in) + 2-oxoglutarate(out) = malonate(out) + 2-oxoglutarate(in). It carries out the reaction succinate(in) + 2-oxoglutarate(out) = succinate(out) + 2-oxoglutarate(in). It catalyses the reaction maleate(in) + 2-oxoglutarate(out) = maleate(out) + 2-oxoglutarate(in). The catalysed reaction is oxaloacetate(in) + 2-oxoglutarate(out) = oxaloacetate(out) + 2-oxoglutarate(in). Catalyzes the transport of 2-oxoglutarate (alpha-oxoglutarate) across the inner mitochondrial membrane in an electroneutral exchange for malate. Can also exchange 2-oxoglutarate for other dicarboxylic acids such as malonate, succinate, maleate and oxaloacetate, although with lower affinity. Contributes to several metabolic processes, including the malate-aspartate shuttle, the oxoglutarate/isocitrate shuttle, in gluconeogenesis from lactate, and in nitrogen metabolism. Maintains mitochondrial fusion and fission events, and the organization and morphology of cristae. Involved in the regulation of apoptosis. Helps protect from cytotoxic-induced apoptosis by modulating glutathione levels in mitochondria. This chain is Mitochondrial 2-oxoglutarate/malate carrier protein (SLC25A11), found in Homo sapiens (Human).